Here is a 234-residue protein sequence, read N- to C-terminus: DNA repair protein RecO (234 aa).

This sequence belongs to the RecO family.

Its function is as follows. Involved in DNA repair and RecF pathway recombination. This Coxiella burnetii (strain RSA 331 / Henzerling II) protein is DNA repair protein RecO.